The following is a 386-amino-acid chain: Uroporphyrinogen decarboxylase (386 aa).

8 residues coordinate coproporphyrinogen I: arginine 44, alanine 46, arginine 48, arginine 57, aspartate 93, tyrosine 170, serine 225, and histidine 364. Arginine 44, alanine 46, and arginine 48 together coordinate coproporphyrinogen III. Coproporphyrinogen III contacts are provided by aspartate 93, tyrosine 170, serine 225, and histidine 364.

It belongs to the uroporphyrinogen decarboxylase family. In terms of assembly, homodimer.

Its subcellular location is the cytoplasm. The protein resides in the cytosol. The catalysed reaction is uroporphyrinogen III + 4 H(+) = coproporphyrinogen III + 4 CO2. It participates in porphyrin-containing compound metabolism; protoporphyrin-IX biosynthesis; coproporphyrinogen-III from 5-aminolevulinate: step 4/4. Functionally, catalyzes the decarboxylation of four acetate groups of uroporphyrinogen-III to yield coproporphyrinogen-III. This Drosophila virilis (Fruit fly) protein is Uroporphyrinogen decarboxylase.